The chain runs to 361 residues: [LysW]-lysine hydrolase (361 aa).

His67 provides a ligand contact to Zn(2+). Asp69 is an active-site residue. A Zn(2+)-binding site is contributed by Asp91. Glu124 acts as the Proton acceptor in catalysis. Zn(2+) is bound by residues Glu125, Glu148, and His326.

Belongs to the peptidase M20A family. LysK subfamily. In terms of assembly, homotetramer and homooctamer. Requires Zn(2+) as cofactor. It depends on Co(2+) as a cofactor.

The protein resides in the cytoplasm. It catalyses the reaction [amino-group carrier protein]-C-terminal-gamma-(L-lysyl)-L-glutamate + H2O = [amino-group carrier protein]-C-terminal-L-glutamate + L-lysine. The protein operates within amino-acid biosynthesis; L-lysine biosynthesis via AAA pathway; L-lysine from L-alpha-aminoadipate (Thermus route): step 5/5. Functionally, catalyzes the release of L-lysine from [LysW]-gamma-L-lysine. In vitro, can deacetylate both N(2)-acetyl-L-lysine and N(2)-acetyl-L-ornithine. This chain is [LysW]-lysine hydrolase, found in Thermus thermophilus (strain ATCC BAA-163 / DSM 7039 / HB27).